The chain runs to 303 residues: Diaminopimelate epimerase (303 aa).

Asparagine 15, glutamine 47, and asparagine 67 together coordinate substrate. Cysteine 76 functions as the Proton donor in the catalytic mechanism. Residues 77-78, asparagine 163, asparagine 197, and 215-216 each bind substrate; these read GN and ER. The active-site Proton acceptor is cysteine 224. 225–226 provides a ligand contact to substrate; it reads GS. The tract at residues 278-303 is disordered; that stretch reads FDPATGEWSRDTQGLQGSGNADRGAA.

It belongs to the diaminopimelate epimerase family. Homodimer.

The protein localises to the cytoplasm. The enzyme catalyses (2S,6S)-2,6-diaminopimelate = meso-2,6-diaminopimelate. It functions in the pathway amino-acid biosynthesis; L-lysine biosynthesis via DAP pathway; DL-2,6-diaminopimelate from LL-2,6-diaminopimelate: step 1/1. Its function is as follows. Catalyzes the stereoinversion of LL-2,6-diaminopimelate (L,L-DAP) to meso-diaminopimelate (meso-DAP), a precursor of L-lysine and an essential component of the bacterial peptidoglycan. In Brucella abortus (strain S19), this protein is Diaminopimelate epimerase.